A 95-amino-acid polypeptide reads, in one-letter code: Large ribosomal subunit protein uL23 (95 aa).

The protein belongs to the universal ribosomal protein uL23 family. As to quaternary structure, part of the 50S ribosomal subunit. Contacts protein L29, and trigger factor when it is bound to the ribosome.

Its function is as follows. One of the early assembly proteins it binds 23S rRNA. One of the proteins that surrounds the polypeptide exit tunnel on the outside of the ribosome. Forms the main docking site for trigger factor binding to the ribosome. In Lawsonia intracellularis (strain PHE/MN1-00), this protein is Large ribosomal subunit protein uL23.